The sequence spans 435 residues: Histone acetyltransferase type B subunit 2 (435 aa).

WD repeat units lie at residues 135–175 (NHAG…SKAP), 188–228 (GQTK…KQDP), 238–278 (GHSA…TAKA), 284–324 (GHNA…TKHH), and 328–368 (AHTN…AEQT). The tract at residues 370–374 (DDAED) is interaction with the histone H4 N-terminus. The stretch at 385–425 (GHTSKVCDISWSPSSPWTIASASEDNILQVWEPSRHLRTPY) is one WD 6 repeat.

Belongs to the WD repeat RBAP46/RBAP48/MSI1 family. Component of the HAT-B complex composed of at least HAT1 and HAT2. The HAT-B complex binds to histone H4 tail.

It localises to the cytoplasm. The protein localises to the nucleus. In terms of biological role, regulatory subunit of the histone acetylase B (HAT-B) complex. The complex acetylates 'Lys-12' of histone H4 which is required for telomeric silencing. The chain is Histone acetyltransferase type B subunit 2 (HAT2) from Cryptococcus neoformans var. neoformans serotype D (strain B-3501A) (Filobasidiella neoformans).